A 254-amino-acid polypeptide reads, in one-letter code: Arginine transport ATP-binding protein ArgV (254 aa).

In terms of domain architecture, ABC transporter spans 6-250 (IDAQQVCKNY…PKEQRTKDFL (245 aa)). An ATP-binding site is contributed by 38–45 (GPSGSGKS).

This sequence belongs to the ABC transporter superfamily. The complex is probably composed of two ATP-binding proteins (ArgV), two transmembrane proteins (ArgU) and a solute-binding protein (ArgT).

The protein resides in the cell membrane. The enzyme catalyses a polar amino acid(out) + ATP + H2O = a polar amino acid(in) + ADP + phosphate + H(+). It carries out the reaction L-arginine(out) + ATP + H2O = L-arginine(in) + ADP + phosphate + H(+). Its function is as follows. Part of the ABC transporter complex ArgTUV involved in L-arginine import. May also transport L-citrulline. Probably responsible for energy coupling to the transport system. This is Arginine transport ATP-binding protein ArgV from Corynebacterium glutamicum (strain ATCC 13032 / DSM 20300 / JCM 1318 / BCRC 11384 / CCUG 27702 / LMG 3730 / NBRC 12168 / NCIMB 10025 / NRRL B-2784 / 534).